Reading from the N-terminus, the 557-residue chain is MLGYLLAGIAIGPWGLGFISDVDEILHFSELGVVFLMFIIGLELNPSKLWQLRRSIFGVGAAQVLLSAALLAGLLMLTDFAWQAAVVGGIGFAMSSTAMALQLMREKGMNRSESGQLGFSVLLFQDLAVIPALALVPLLAGSADEHFDWMKIGMKVLEFVGMLIGGRYLLRPVFRFIAASGVREVFTAATLLLVLGSALFMDALGLSMALGTFIAGVLLAESEYRHELETAIDPFKGLLLGLFFISVGMSLNLGVLYTHLLWVVISVVVLVAVKILVLYLLARLYGVRSSERMQFAGVLSQGGEFAFVLFSTASSQRLFQGDQMAPLLMKLVDKWLSRQFNGPEEEDEKPWVNDDKPQVIVVGFGRFGQVIGRLLMANKMRITVLERDISAVNLMRKYGYKVYYGDATQVDLLRSAGAEAAESIVITCNEPEDTMKLVEICQQHFPHLHILARARGRVEAHELLQAGVTQFSRETFSSALELGRKTLVTLGMHPHQAQRAQLHFRRLDMRMLRELIPMHADTVQISRAREARRELEEIFQREMQQERRQLDGWDEFE.

10 helical membrane passes run 2 to 22 (LGYLLAGIAIGPWGLGFISDV), 24 to 44 (EILHFSELGVVFLMFIIGLEL), 56 to 76 (IFGVGAAQVLLSAALLAGLLM), 84 to 104 (AAVVGGIGFAMSSTAMALQLM), 121 to 141 (VLLFQDLAVIPALALVPLLAG), 146 to 166 (HFDWMKIGMKVLEFVGMLIGG), 176 to 196 (FIAASGVREVFTAATLLLVLG), 199 to 219 (LFMDALGLSMALGTFIAGVLL), 237 to 257 (GLLLGLFFISVGMSLNLGVLY), and 260 to 280 (LLWVVISVVVLVAVKILVLYL). The 120-residue stretch at 356–475 (KPQVIVVGFG…AGVTQFSRET (120 aa)) folds into the RCK N-terminal domain.

It belongs to the monovalent cation:proton antiporter 2 (CPA2) transporter (TC 2.A.37) family. KefB subfamily. As to quaternary structure, interacts with the regulatory subunit KefG.

It is found in the cell inner membrane. In terms of biological role, pore-forming subunit of a potassium efflux system that confers protection against electrophiles. Catalyzes K(+)/H(+) antiport. This chain is Putative glutathione-regulated potassium-efflux system protein KefB, found in Shigella flexneri.